The following is a 311-amino-acid chain: Acetyl-coenzyme A carboxylase carboxyl transferase subunit alpha (311 aa).

The 251-residue stretch at 36-286 (ELKKEVERVY…VNYFLKSLEE (251 aa)) folds into the CoA carboxyltransferase C-terminal domain.

The protein belongs to the AccA family. As to quaternary structure, acetyl-CoA carboxylase is a heterohexamer composed of biotin carboxyl carrier protein (AccB), biotin carboxylase (AccC) and two subunits each of ACCase subunit alpha (AccA) and ACCase subunit beta (AccD).

It is found in the cytoplasm. The enzyme catalyses N(6)-carboxybiotinyl-L-lysyl-[protein] + acetyl-CoA = N(6)-biotinyl-L-lysyl-[protein] + malonyl-CoA. It functions in the pathway lipid metabolism; malonyl-CoA biosynthesis; malonyl-CoA from acetyl-CoA: step 1/1. Functionally, component of the acetyl coenzyme A carboxylase (ACC) complex. First, biotin carboxylase catalyzes the carboxylation of biotin on its carrier protein (BCCP) and then the CO(2) group is transferred by the carboxyltransferase to acetyl-CoA to form malonyl-CoA. The chain is Acetyl-coenzyme A carboxylase carboxyl transferase subunit alpha from Wolinella succinogenes (strain ATCC 29543 / DSM 1740 / CCUG 13145 / JCM 31913 / LMG 7466 / NCTC 11488 / FDC 602W) (Vibrio succinogenes).